The sequence spans 248 residues: Transcription factor cicD (248 aa).

Basic and acidic residues predominate over residues 1 to 22 (MVGSRHPDQCAKRWHHSLDPNV). A disordered region spans residues 1–25 (MVGSRHPDQCAKRWHHSLDPNVKRG). The HTH myb-type domain occupies 19–74 (DPNVKRGPWTMEEDSSLLEAVQKIGRDWKEIGRELFPSRSTTDIKNRYVILSRRRG). Residues 46-70 (WKEIGRELFPSRSTTDIKNRYVILS) constitute a DNA-binding region (H-T-H motif). The interval 186-208 (SELEGSFTSRNHEEPPQPLPVPD) is disordered.

It is found in the nucleus. Its function is as follows. Transcription factor that regulates the expression of the gene cluster that mediates the biosynthesis of cichorine, a phytotoxin active against knapweed, corn, and soybeans. The protein is Transcription factor cicD of Emericella nidulans (strain FGSC A4 / ATCC 38163 / CBS 112.46 / NRRL 194 / M139) (Aspergillus nidulans).